A 476-amino-acid chain; its full sequence is Ovarian-specific serine/threonine-protein kinase Lok (476 aa).

Residues 69–129 form the FHA domain; it reads FTAGRGEAND…NGTFVNNEKI (61 aa). Positions 174–441 constitute a Protein kinase domain; that stretch reads YYVNRKLGSG…IDDVLQSSWL (268 aa). ATP is bound by residues 180–188 and Lys-203; that span reads LGSGAYGLV. The active-site Proton acceptor is the Asp-303.

This sequence belongs to the protein kinase superfamily. CAMK Ser/Thr protein kinase family. CDS1 subfamily. As to expression, in stage 3 embryos, both isoforms are expressed in both somatic and pole cell nuclei. Expression in pole cell nuclei is sustained until stage 9 and weakly expressed after pole cell invagination into the abdominal cavity.

It localises to the nucleus speckle. The enzyme catalyses L-seryl-[protein] + ATP = O-phospho-L-seryl-[protein] + ADP + H(+). The catalysed reaction is L-threonyl-[protein] + ATP = O-phospho-L-threonyl-[protein] + ADP + H(+). Functionally, may have a role in germline establishment. The polypeptide is Ovarian-specific serine/threonine-protein kinase Lok (lok) (Drosophila melanogaster (Fruit fly)).